We begin with the raw amino-acid sequence, 500 residues long: ATP synthase subunit alpha (500 aa).

Residue 169–176 coordinates ATP; the sequence is GDRQTGKT.

This sequence belongs to the ATPase alpha/beta chains family. F-type ATPases have 2 components, CF(1) - the catalytic core - and CF(0) - the membrane proton channel. CF(1) has five subunits: alpha(3), beta(3), gamma(1), delta(1), epsilon(1). CF(0) has three main subunits: a(1), b(2) and c(9-12). The alpha and beta chains form an alternating ring which encloses part of the gamma chain. CF(1) is attached to CF(0) by a central stalk formed by the gamma and epsilon chains, while a peripheral stalk is formed by the delta and b chains.

The protein resides in the cell inner membrane. The enzyme catalyses ATP + H2O + 4 H(+)(in) = ADP + phosphate + 5 H(+)(out). Its function is as follows. Produces ATP from ADP in the presence of a proton gradient across the membrane. The alpha chain is a regulatory subunit. This chain is ATP synthase subunit alpha, found in Fusobacterium nucleatum subsp. nucleatum (strain ATCC 25586 / DSM 15643 / BCRC 10681 / CIP 101130 / JCM 8532 / KCTC 2640 / LMG 13131 / VPI 4355).